A 122-amino-acid polypeptide reads, in one-letter code: Insulin-like 3 (122 aa).

Residues M1–A15 form the signal peptide. 3 disulfide bridges follow: C29–C107, C41–C120, and C106–C111.

It belongs to the insulin family. In terms of assembly, heterodimer of a B chain and an A chain linked by two disulfide bonds. Expressed exclusively in Leydig cells of the testis.

The protein localises to the secreted. Seems to play a role in testicular function. May be a trophic hormone with a role in testicular descent in fetal life. Is a ligand for LGR8 receptor. The polypeptide is Insulin-like 3 (Insl3) (Mus musculus (Mouse)).